The primary structure comprises 804 residues: Probable replication endonuclease from prophage-like region (804 aa).

Active-site O-(5'-phospho-DNA)-tyrosine intermediate residues include Y498 and Y502.

The protein belongs to the phage GPA family.

In terms of biological role, possible endonuclease which induces a single-strand cut and initiates DNA replication. This Escherichia coli O6:H1 (strain CFT073 / ATCC 700928 / UPEC) protein is Probable replication endonuclease from prophage-like region.